Here is a 421-residue protein sequence, read N- to C-terminus: Tyrosine--tRNA ligase (421 aa).

Tyr38 serves as a coordination point for L-tyrosine. The 'HIGH' region signature appears at 43–52 (PTGDSLHIGH). Positions 169 and 173 each coordinate L-tyrosine. A 'KMSKS' region motif is present at residues 231–235 (KFGKS). Lys234 is an ATP binding site. Residues 353–419 (KNLVDFLVDT…GKKKYTLVHI (67 aa)) enclose the S4 RNA-binding domain.

It belongs to the class-I aminoacyl-tRNA synthetase family. TyrS type 1 subfamily. Homodimer.

It is found in the cytoplasm. It catalyses the reaction tRNA(Tyr) + L-tyrosine + ATP = L-tyrosyl-tRNA(Tyr) + AMP + diphosphate + H(+). In terms of biological role, catalyzes the attachment of tyrosine to tRNA(Tyr) in a two-step reaction: tyrosine is first activated by ATP to form Tyr-AMP and then transferred to the acceptor end of tRNA(Tyr). The protein is Tyrosine--tRNA ligase of Lactobacillus delbrueckii subsp. bulgaricus (strain ATCC BAA-365 / Lb-18).